Reading from the N-terminus, the 1190-residue chain is MKNRTFATIDGNEAVAQVVYQINEVIAIYPITPSSPMAEWSDAWASEGKPNIWGTVPTVVQMQSEGGVAGAVHGALQTGSLTTTFTASQGLLLMIPNMYKIAGELTPTVFHIAARSLAAQALSIFGDHSDVMATRGTGFAMLCAASVQEAHDFALISTRITLESRIPFLHFFDGFRTSHEINKIELLTTEDFKGFIPNELVIAHRSRALTPDKPVLRGTAQNPDVYFQARETVNPYYLACPEITQKVMDEFAQMTGRQYQLFEYHGDPTAERVIILMGSGCETVHETVDYLNALGEKVGVIKVRLYQPFDSQRFIAALPTTTRGIAVLDRTKEPGASGEPLYLDVVTALYEKWGVGSLPTVIGGRYGLSSKEFTPGMVKAVFDNLAATIPKNHFTIGINDDVSHTSLDYDPDFNIEPDNIVRAIFYGLGADGTVGANKNSIKIIGEETNNYAQGYFVYDSKKSGSVTVSHLRFGSQLIRSTYLINKASFVACHQWDFLEKFPILKDIVQGGTFLLNSPYDQDEVWERLPGKIQAQIQQKQLKVYVINAYKVAREAGMAGRINTVMQVCFFALSNVLPREEAIAEIKKYIRKTYGKKGDQIVQMNIKAVDTTLDNLHELVTREYSAPPQIPNHHYPLSPEGAPPSSIPYILGKMIAREGDELPVSALPNDGTYPTGTAKWEKRNIAQEIPVWDTDVCIQCGKCVMVCPHSVIRSKVYEPEQLENAPSTFKSANAKDHDWHGLKFTIQVAAEDCTGCGICVDVCPAKNKAQPRKKAINMEPQLPLRQAERENWDFFLSIPNPDRRELKLTHINQQQMQEPLFEFSGACAGCGETPYIKLGTQLFGDRMIVANATGCSSIYGGNLPTTPWTQNAAGRGPAWSNSLFEDNAEFGLGFRVSIDKQTEIASQLLQELATVVGRELVDDILNNQQNNEAEIWEQRDRISILKQKLQALVNPELTSKAQLLLSLADYLVKKSVWIIGGDGWAYDIGYGGLDHVLASGRNVNILVLDTEVYSNTGGQMSKATPKGAVAKFASGGKPAAKKDLGLMAMTYGNVYVASVAMGAKDEHTLKAFLEAEAYSGTSLIIAYSHCIAHGINLSTAMQNQKAAVDSGRWLLYRYHPDLVKQGKNPLQLDSRTPKLPLEESMYLENRFKMLTKINPEVAKELLKEAQTDVNLRWQMYQYLAAREVTQG.

4Fe-4S ferredoxin-type domains lie at 687–716 (EIPVWDTDVCIQCGKCVMVCPHSVIRSKVY) and 743–773 (FTIQVAAEDCTGCGICVDVCPAKNKAQPRKK). Residues Cys-696, Cys-699, Cys-702, Cys-706, Cys-752, Cys-755, Cys-758, Cys-762, Cys-826, Cys-829, Cys-854, and Cys-1089 each contribute to the [4Fe-4S] cluster site.

It belongs to the pyruvate:ferredoxin/flavodoxin oxidoreductase family. It depends on [4Fe-4S] cluster as a cofactor.

The enzyme catalyses oxidized [flavodoxin] + pyruvate + CoA + 2 H(+) = reduced [flavodoxin] + acetyl-CoA + CO2. Its function is as follows. Oxidoreductase required for the transfer of electrons from pyruvate to flavodoxin, which reduces nitrogenase. The chain is Pyruvate-flavodoxin oxidoreductase (nifJ) from Trichormus variabilis (strain ATCC 29413 / PCC 7937) (Anabaena variabilis).